Here is a 427-residue protein sequence, read N- to C-terminus: Succinate--CoA ligase [ADP-forming] subunit beta, mitochondrial (427 aa).

The transit peptide at 1-30 (MYSRKSLSLISKCGQLSRLNAQAALQARRH) directs the protein to the mitochondrion. Positions 39–284 (AQLLREYGIG…LSQEDPDEVK (246 aa)) constitute an ATP-grasp domain. ATP is bound by residues K76 and 83 to 85 (GRG). At S102 the chain carries Phosphoserine. E144 lines the ATP pocket. Residues N236 and D253 each contribute to the Mg(2+) site. Phosphoserine occurs at positions 263 and 276. Substrate is bound by residues N304 and 361-363 (GIV).

This sequence belongs to the succinate/malate CoA ligase beta subunit family. In terms of assembly, heterodimer of an alpha and a beta subunit. Mg(2+) serves as cofactor.

The protein resides in the mitochondrion. The enzyme catalyses succinate + ATP + CoA = succinyl-CoA + ADP + phosphate. The protein operates within carbohydrate metabolism; tricarboxylic acid cycle; succinate from succinyl-CoA (ligase route): step 1/1. Its function is as follows. Succinyl-CoA synthetase functions in the citric acid cycle (TCA), coupling the hydrolysis of succinyl-CoA to the synthesis of ATP and thus represents the only step of substrate-level phosphorylation in the TCA. The beta subunit provides nucleotide specificity of the enzyme and binds the substrate succinate, while the binding sites for coenzyme A and phosphate are found in the alpha subunit. The sequence is that of Succinate--CoA ligase [ADP-forming] subunit beta, mitochondrial from Saccharomyces cerevisiae (strain ATCC 204508 / S288c) (Baker's yeast).